A 548-amino-acid chain; its full sequence is Lysine--tRNA ligase (548 aa).

The short motif at 52 to 60 (PSGLPHIGT) is the 'HIGH' region element. The 'KMSKS' region signature appears at 300–304 (KISKS). An ATP-binding site is contributed by Lys-303.

The protein belongs to the class-I aminoacyl-tRNA synthetase family.

It is found in the cytoplasm. The catalysed reaction is tRNA(Lys) + L-lysine + ATP = L-lysyl-tRNA(Lys) + AMP + diphosphate. The protein is Lysine--tRNA ligase of Mesorhizobium japonicum (strain LMG 29417 / CECT 9101 / MAFF 303099) (Mesorhizobium loti (strain MAFF 303099)).